The sequence spans 292 residues: Elongation factor Ts (292 aa).

Positions Thr79–Val82 are involved in Mg(2+) ion dislocation from EF-Tu.

Belongs to the EF-Ts family.

It is found in the cytoplasm. Its function is as follows. Associates with the EF-Tu.GDP complex and induces the exchange of GDP to GTP. It remains bound to the aminoacyl-tRNA.EF-Tu.GTP complex up to the GTP hydrolysis stage on the ribosome. The chain is Elongation factor Ts from Staphylococcus haemolyticus (strain JCSC1435).